Here is a 467-residue protein sequence, read N- to C-terminus: Argininosuccinate lyase (467 aa).

The protein belongs to the lyase 1 family. Argininosuccinate lyase subfamily.

Its subcellular location is the cytoplasm. It catalyses the reaction 2-(N(omega)-L-arginino)succinate = fumarate + L-arginine. It participates in amino-acid biosynthesis; L-arginine biosynthesis; L-arginine from L-ornithine and carbamoyl phosphate: step 3/3. This is Argininosuccinate lyase from Nitrosococcus oceani (strain ATCC 19707 / BCRC 17464 / JCM 30415 / NCIMB 11848 / C-107).